A 351-amino-acid polypeptide reads, in one-letter code: GDSL esterase/lipase At4g26790 (351 aa).

An N-terminal signal peptide occupies residues 1 to 25 (MQRNRVLAFLLLAAQLLVKIPETCA). The active-site Nucleophile is Ser36. Asn118 is a glycosylation site (N-linked (GlcNAc...) asparagine). Residues Asp326 and His329 contribute to the active site.

This sequence belongs to the 'GDSL' lipolytic enzyme family.

Its subcellular location is the secreted. The polypeptide is GDSL esterase/lipase At4g26790 (Arabidopsis thaliana (Mouse-ear cress)).